Reading from the N-terminus, the 117-residue chain is uncharacterized protein (117 aa).

Residues Met-1 to Ser-21 form a helical membrane-spanning segment. Residues Leu-38–Lys-67 adopt a coiled-coil conformation.

The protein localises to the cell membrane. This is an uncharacterized protein from Bacillus subtilis (strain 168).